We begin with the raw amino-acid sequence, 118 residues long: UPF0102 protein Arth_2474 (118 aa).

It belongs to the UPF0102 family.

In Arthrobacter sp. (strain FB24), this protein is UPF0102 protein Arth_2474.